Consider the following 263-residue polypeptide: 3-oxo-5-alpha-steroid 4-dehydrogenase 1 (263 aa).

Helical transmembrane passes span 16–33, 90–110, 115–135, 155–175, and 213–233; these read MLAALAYLQCAVGCAVLA, ILLAMFLVHYGHRCLIYPFLM, PMPLLACTMAIMFCTFNGYLQ, FLIGFGLWLAGMLINIHSDHI, and YALASWSVQGAAFAFFTFCFL.

The protein belongs to the steroid 5-alpha reductase family.

It localises to the microsome membrane. It is found in the endoplasmic reticulum membrane. It catalyses the reaction a 3-oxo-5alpha-steroid + NADP(+) = a 3-oxo-Delta(4)-steroid + NADPH + H(+). The enzyme catalyses 5alpha-pregnane-3,20-dione + NADP(+) = progesterone + NADPH + H(+). It carries out the reaction 17beta-hydroxy-5alpha-androstan-3-one + NADP(+) = testosterone + NADPH + H(+). The catalysed reaction is androst-4-ene-3,17-dione + NADPH + H(+) = 5alpha-androstan-3,17-dione + NADP(+). Functionally, converts testosterone into 5-alpha-dihydrotestosterone and progesterone or corticosterone into their corresponding 5-alpha-3-oxosteroids. It plays a central role in sexual differentiation and androgen physiology. The polypeptide is 3-oxo-5-alpha-steroid 4-dehydrogenase 1 (SRD5A1) (Macaca fascicularis (Crab-eating macaque)).